The primary structure comprises 146 residues: Phospholipase A2, membrane associated (146 aa).

Positions 1 to 21 are cleaved as a signal peptide; it reads MKVLLLLAASIMAFGSIQVQG. 7 disulfide bridges follow: Cys47–Cys139, Cys49–Cys65, Cys64–Cys119, Cys70–Cys146, Cys71–Cys112, Cys80–Cys105, and Cys98–Cys110. His48, Gly50, and Gly52 together coordinate Ca(2+). His68 is a catalytic residue. Asp69 lines the Ca(2+) pocket. The active site involves Asp113.

It belongs to the phospholipase A2 family. Requires Ca(2+) as cofactor. In terms of tissue distribution, mainly in the Paneth cells adjacent to the stem population in the small intestines.

Its subcellular location is the secreted. It localises to the cell membrane. The protein localises to the mitochondrion outer membrane. The enzyme catalyses a 1,2-diacyl-sn-glycero-3-phosphoethanolamine + H2O = a 1-acyl-sn-glycero-3-phosphoethanolamine + a fatty acid + H(+). The catalysed reaction is 1-hexadecanoyl-2-(9Z-octadecenoyl)-sn-glycero-3-phosphoethanolamine + H2O = 1-hexadecanoyl-sn-glycero-3-phosphoethanolamine + (9Z)-octadecenoate + H(+). It carries out the reaction 1-hexadecanoyl-2-(9Z,12Z-octadecadienoyl)-sn-glycero-3-phosphoethanolamine + H2O = 1-hexadecanoyl-sn-glycero-3-phosphoethanolamine + (9Z,12Z)-octadecadienoate + H(+). It catalyses the reaction 1-hexadecanoyl-2-(5Z,8Z,11Z,14Z-eicosatetraenoyl)-sn-glycero-3-phosphoethanolamine + H2O = 1-hexadecanoyl-sn-glycero-3-phosphoethanolamine + (5Z,8Z,11Z,14Z)-eicosatetraenoate + H(+). The enzyme catalyses N-hexadecanoyl-1,2-di-(9Z-octadecenoyl)-sn-glycero-3-phosphoethanolamine + H2O = N-hexadecanoyl-1-(9Z-octadecenoyl)-sn-glycero-3-phosphoethanolamine + (9Z)-octadecenoate + H(+). The catalysed reaction is 1,2-dihexadecanoyl-sn-glycero-3-phospho-(1'-sn-glycerol) + H2O = 1-hexadecanoyl-sn-glycero-3-phospho-(1'-sn-glycerol) + hexadecanoate + H(+). It carries out the reaction 1-hexadecanoyl-2-(9Z-octadecenoyl)-sn-glycero-3-phosphoglycerol + H2O = 1-hexadecanoyl-sn-glycero-3-phosphoglycerol + (9Z)-octadecenoate + H(+). It catalyses the reaction 1-hexadecanoyl-2-(9Z-octadecenoyl)-sn-glycero-3-phospho-(1'-sn-glycerol) + H2O = 1-hexadecanoyl-sn-glycero-3-phospho-(1'-sn-glycerol) + (9Z)-octadecenoate + H(+). The enzyme catalyses a 1,2-diacyl-sn-glycero-3-phosphocholine + H2O = a 1-acyl-sn-glycero-3-phosphocholine + a fatty acid + H(+). The catalysed reaction is 1,2-dihexadecanoyl-sn-glycero-3-phosphocholine + H2O = 1-hexadecanoyl-sn-glycero-3-phosphocholine + hexadecanoate + H(+). It carries out the reaction 1-hexadecanoyl-2-(9Z-octadecenoyl)-sn-glycero-3-phosphocholine + H2O = 1-hexadecanoyl-sn-glycero-3-phosphocholine + (9Z)-octadecenoate + H(+). It catalyses the reaction 1-hexadecanoyl-2-(9Z,12Z-octadecadienoyl)-sn-glycero-3-phosphocholine + H2O = (9Z,12Z)-octadecadienoate + 1-hexadecanoyl-sn-glycero-3-phosphocholine + H(+). The enzyme catalyses 1-hexadecanoyl-2-(4Z,7Z,10Z,13Z,16Z,19Z-docosahexaenoyl)-sn-glycero-3-phosphocholine + H2O = (4Z,7Z,10Z,13Z,16Z,19Z)-docosahexaenoate + 1-hexadecanoyl-sn-glycero-3-phosphocholine + H(+). Secretory calcium-dependent phospholipase A2 that primarily targets extracellular phospholipids with implications in host antimicrobial defense, inflammatory response and tissue regeneration. Hydrolyzes the ester bond of the fatty acyl group attached at sn-2 position of phospholipids (phospholipase A2 activity) with preference for phosphatidylethanolamines and phosphatidylglycerols over phosphatidylcholines. Contributes to lipid remodeling of cellular membranes and generation of lipid mediators involved in pathogen clearance. Displays bactericidal activity against Gram-positive bacteria by directly hydrolyzing phospholipids of the bacterial membrane. Upon sterile inflammation, targets membrane phospholipids of extracellular mitochondria released from activated platelets, generating free unsaturated fatty acids such as arachidonate that is used by neighboring leukocytes to synthesize inflammatory eicosanoids such as leukotrienes. Simultaneously, by compromising mitochondrial membrane integrity, promotes the release in circulation of potent damage-associated molecular pattern molecules that activate the innate immune response. Plays a stem cell regulator role in the intestinal crypt. Within intracellular compartment mediates Paneth cell differentiation and its stem cell supporting functions by inhibiting Wnt signaling pathway in intestinal stem cell (ICS). Secreted in the intestinal lumen upon inflammation, acts in an autocrine way and promotes prostaglandin E2 synthesis that stimulates Wnt signaling pathway in ICS cells and tissue regeneration. May play a role in the biosynthesis of N-acyl ethanolamines that regulate energy metabolism and inflammation. Hydrolyzes N-acyl phosphatidylethanolamines to N-acyl lysophosphatidylethanolamines, which are further cleaved by a lysophospholipase D to release N-acyl ethanolamines. Independent of its catalytic activity, acts as a ligand for integrins. Binds to and activates integrins ITGAV:ITGB3, ITGA4:ITGB1 and ITGA5:ITGB1. Binds to a site (site 2) which is distinct from the classical ligand-binding site (site 1) and induces integrin conformational changes and enhanced ligand binding to site 1. Induces cell proliferation in an integrin-dependent manner. This chain is Phospholipase A2, membrane associated (Pla2g2a), found in Mus musculus (Mouse).